The chain runs to 415 residues: MGQPANRSVFLLAPNGSHAPDQGDSQERSEAWVVGMGIVMSLIVLAIVFGNVLVITAIARFERLQTVTNYFITSLACADLVMGLAVVPFGASHILMKMWTFGNFWCEFWTSIDVLCVTASIETLCVIAVDRYFAITSPFKYQSLLTKNKARVVILMVWIVSGLTSFLPIQMHWYRATHQEAINCYAKETCCDFFTNQAYAIASSIVSFYLPLVVMVFVYSRVFQVAQRQLQKIDRSEGRFHAQNLSQVEQDGRSGHGHRRSSKFCLKEHKALKTLGIIMGTFTLCWLPFFIVNIVHVIQDNLIPKEVYILLNWVGYVNSAFNPLIYCRSPDFRIAFQELLCLRRSSLKAYGNGYSNNSNSRSDYAGEHSGCHLGQEKDSELLCEDPPGTEDRQGTVPSDSVDSQGRNCSTNDSLL.

Residues 1–34 (MGQPANRSVFLLAPNGSHAPDQGDSQERSEAWVV) lie on the Extracellular side of the membrane. Residues N6 and N15 are each glycosylated (N-linked (GlcNAc...) asparagine). A helical transmembrane segment spans residues 35–58 (GMGIVMSLIVLAIVFGNVLVITAI). At 59–71 (ARFERLQTVTNYF) the chain is on the cytoplasmic side. Residues 72–95 (ITSLACADLVMGLAVVPFGASHIL) form a helical membrane-spanning segment. The Extracellular segment spans residues 96 to 106 (MKMWTFGNFWC). Disulfide bonds link C106/C191 and C184/C190. A helical transmembrane segment spans residues 107-129 (EFWTSIDVLCVTASIETLCVIAV). Residues 130–150 (DRYFAITSPFKYQSLLTKNKA) lie on the Cytoplasmic side of the membrane. Y141 is modified (phosphotyrosine). The chain crosses the membrane as a helical span at residues 151–174 (RVVILMVWIVSGLTSFLPIQMHWY). At 175–196 (RATHQEAINCYAKETCCDFFTN) the chain is on the extracellular side. The helical transmembrane segment at 197–220 (QAYAIASSIVSFYLPLVVMVFVYS) threads the bilayer. Residues 221-274 (RVFQVAQRQLQKIDRSEGRFHAQNLSQVEQDGRSGHGHRRSSKFCLKEHKALKT) lie on the Cytoplasmic side of the membrane. S246 bears the Phosphoserine mark. Phosphoserine; by PKA occurs at positions 261 and 262. A lipid anchor (S-palmitoyl cysteine) is attached at C265. Residues 275–298 (LGIIMGTFTLCWLPFFIVNIVHVI) traverse the membrane as a helical segment. Topologically, residues 299 to 305 (QDNLIPK) are extracellular. Residues 306 to 329 (EVYILLNWVGYVNSAFNPLIYCRS) traverse the membrane as a helical segment. The Cytoplasmic segment spans residues 330 to 415 (PDFRIAFQEL…RNCSTNDSLL (86 aa)). Residue C341 is the site of S-palmitoyl cysteine attachment. S345 and S346 each carry phosphoserine; by PKA. Residue S355 is modified to Phosphoserine; by BARK. Residues 379–415 (SELLCEDPPGTEDRQGTVPSDSVDSQGRNCSTNDSLL) form a disordered region. Residues P387 and P397 each carry the 4-hydroxyproline modification. Over residues 395-415 (TVPSDSVDSQGRNCSTNDSLL) the composition is skewed to polar residues. The PDZ-binding motif lies at 412–415 (DSLL).

It belongs to the G-protein coupled receptor 1 family. Adrenergic receptor subfamily. ADRB2 sub-subfamily. Binds NHERF1 and GPRASP1. Interacts with ARRB1 and ARRB2. Interacts with SRC. Interacts with USP20 and USP33. Interacts with VHL; the interaction, which is increased on hydroxylation of ADRB2, ubiquitinates ADRB2 leading to its degradation. Interacts with EGLN3; the interaction hydroxylates ADRB2 facilitating VHL-E3 ligase-mediated ubiquitination. Interacts (via PDZ-binding motif) with SNX27 (via PDZ domain); the interaction is required when endocytosed to prevent degradation in lysosomes and promote recycling to the plasma membrane. Interacts with CNIH4. Interacts with ARRDC3. Interacts with NEDD4. Interacts with MARCHF2. In terms of processing, palmitoylated; may reduce accessibility of Ser-345 and Ser-346 by anchoring Cys-341 to the plasma membrane. Agonist stimulation promotes depalmitoylation and further allows Ser-345 and Ser-346 phosphorylation. Phosphorylated by PKA and BARK upon agonist stimulation, which mediates homologous desensitization of the receptor. PKA-mediated phosphorylation seems to facilitate phosphorylation by BARK. Post-translationally, phosphorylation of Tyr-141 is induced by insulin and leads to supersensitization of the receptor. In terms of processing, polyubiquitinated. Agonist-induced ubiquitination leads to sort internalized receptors to the lysosomes for degradation. Deubiquitination by USP20 and USP33, leads to ADRB2 recycling and resensitization after prolonged agonist stimulation. USP20 and USP33 are constitutively associated and are dissociated immediately after agonist stimulation. Ubiquitination by the VHL-E3 ligase complex is oxygen-dependent. Hydroxylation by EGLN3 occurs only under normoxia and increases the interaction with VHL and the subsequent ubiquitination and degradation of ADRB2. Post-translationally, palmitoylated. Mainly palmitoylated at Cys-341. Palmitoylation may reduce accessibility of phosphorylation sites by anchoring the receptor to the plasma membrane. Agonist stimulation promotes depalmitoylation and further allows Ser-345 and Ser-346 phosphorylation. Also undergoes transient, ligand-induced palmitoylation at Cys-265 probably by ZDHHC9, ZDHHC14 and ZDHHC18 within the Golgi. Palmitoylation at Cys-265 requires phosphorylation by PKA and receptor internalization and stabilizes the receptor. Could be depalmitoylated by LYPLA1 at the plasma membrane.

The protein resides in the cell membrane. It localises to the early endosome. Its subcellular location is the golgi apparatus. In terms of biological role, beta-adrenergic receptors mediate the catecholamine-induced activation of adenylate cyclase through the action of G proteins. The beta-2-adrenergic receptor binds epinephrine with an approximately 30-fold greater affinity than it does norepinephrine. The polypeptide is Beta-2 adrenergic receptor (ADRB2) (Canis lupus familiaris (Dog)).